We begin with the raw amino-acid sequence, 555 residues long: Putative outer capsid protein p10 (555 aa).

The protein resides in the virion. This is Putative outer capsid protein p10 (S10) from Saccharum officinarum (Sugarcane).